A 308-amino-acid polypeptide reads, in one-letter code: Putative mitochondrial transporter UCP3 (308 aa).

At M1–P10 the chain is on the mitochondrial intermembrane side. The chain crosses the membrane as a helical span at residues P11–F32. 3 Solcar repeats span residues P11–F102, S111–K202, and D211–A296. Residues P33–S73 are Mitochondrial matrix-facing. Residues P74–Y96 form a helical membrane-spanning segment. Topologically, residues D97–R116 are mitochondrial intermembrane. The helical transmembrane segment at I117–P133 threads the bilayer. Over T134 to W179 the chain is Mitochondrial matrix. The helical transmembrane segment at P180 to Y196 threads the bilayer. The Mitochondrial intermembrane segment spans residues D197–F213. The helical transmembrane segment at P214–P233 threads the bilayer. Residues V234–A267 are Mitochondrial matrix-facing. Residues F268–Y290 traverse the membrane as a helical segment. Residues S275–L297 are purine nucleotide binding. The Mitochondrial intermembrane portion of the chain corresponds to E291–F308.

It belongs to the mitochondrial carrier (TC 2.A.29) family. In terms of assembly, interacts with HAX1; the interaction is direct and calcium-dependent.

It is found in the mitochondrion inner membrane. Functionally, putative transmembrane transporter that plays a role in mitochondrial metabolism via an as yet unclear mechanism. Originally, this mitochondrial protein was thought to act as a proton transmembrane transporter from the mitochondrial intermembrane space into the matrix, causing proton leaks through the inner mitochondrial membrane, thereby uncoupling mitochondrial membrane potential generation from ATP synthesis. However, this function is controversial and uncoupling may not be the function, or at least not the main function, but rather a consequence of more conventional metabolite transporter activity. The protein is Putative mitochondrial transporter UCP3 of Rattus norvegicus (Rat).